A 497-amino-acid chain; its full sequence is Interferon regulatory factor 5 (497 aa).

The Nuclear localization signal motif lies at 12–18 (PRRVRLK). The segment at residues 14-122 (RVRLKPWLVA…QPYKIYEVCS (109 aa)) is a DNA-binding region (IRF tryptophan pentad repeat). Residues 124-178 (GPAPTESQPTDDYVLGEEEEEEEEELQRMLPGLSITEPALPGPPNAPYSLPKEDT) form a disordered region. A compositionally biased stretch (acidic residues) spans 137–148 (VLGEEEEEEEEE). Residues 149–159 (LQRMLPGLSIT) carry the Nuclear export signal motif. The residue at position 157 (S157) is a Phosphoserine; by TBK1. Position 300 is a phosphoserine (S300). Residues K410 and K411 each participate in a glycyl lysine isopeptide (Lys-Gly) (interchain with G-Cter in ubiquitin) cross-link. Residue S430 is modified to Phosphoserine. S434 bears the Phosphoserine; by IKKB mark. 2 positions are modified to phosphoserine: S436 and S439. S445 carries the phosphoserine; by IKKB modification.

This sequence belongs to the IRF family. Homodimer, when phosphorylated. Interacts with TASL (via pLxIS motif); interaction takes place downstream of TLR7, TLR8 or TLR9, leading to its activation. Interacts with MYD88 and TRAF6. In terms of processing, phosphorylation of serine and threonine residues by IKBKB in a C-terminal autoinhibitory region, stimulates dimerization, transport into the nucleus, assembly with the coactivator CBP/EP300 and initiation of transcription. 'Lys-63'-linked polyubiquitination by TRAF6 is required for activation.

The protein resides in the cytoplasm. It localises to the nucleus. Maintained as a monomer in an autoinhibited state. Phosphorylation and activation follow the following steps: innate adapter protein TASL recruits IRF5, thereby licensing IRF5 for phosphorylation by IKBKB. Phosphorylated IRF5 dissociates from the adapter proteins, dimerizes, and then enters the nucleus to induce IFNs. In terms of biological role, transcription factor that plays a critical role in innate immunity by activating expression of type I interferon (IFN) IFNA and INFB and inflammatory cytokines downstream of endolysosomal toll-like receptors TLR7, TLR8 and TLR9. Regulates the transcription of type I IFN genes (IFN-alpha and IFN-beta) and IFN-stimulated genes (ISG) by binding to an interferon-stimulated response element (ISRE) in their promoters. Can efficiently activate both the IFN-beta (IFNB) and the IFN-alpha (IFNA) genes and mediate their induction downstream of the TLR-activated, MyD88-dependent pathway. This is Interferon regulatory factor 5 from Mus musculus (Mouse).